We begin with the raw amino-acid sequence, 144 residues long: Cytochrome c-type biogenesis protein CcmE (144 aa).

The Cytoplasmic segment spans residues 1–7 (MKPRHKR). The chain crosses the membrane as a helical; Signal-anchor for type II membrane protein span at residues 8-28 (ALIIIAALIAIGVAALLILNA). Residues 29-144 (LNSNIALYVT…DQAQKNGSAK (116 aa)) are Periplasmic-facing. The heme site is built by His121 and Tyr125.

Belongs to the CcmE/CycJ family.

It is found in the cell inner membrane. Its function is as follows. Heme chaperone required for the biogenesis of c-type cytochromes. Transiently binds heme delivered by CcmC and transfers the heme to apo-cytochromes in a process facilitated by CcmF and CcmH. The protein is Cytochrome c-type biogenesis protein CcmE of Polynucleobacter necessarius subsp. necessarius (strain STIR1).